We begin with the raw amino-acid sequence, 753 residues long: Rsm22-cox11 tandem protein 2, mitochondrial (753 aa).

Residues Met1 to Trp39 constitute a mitochondrion transit peptide. Positions 323, 329, 342, and 430 each coordinate [4Fe-4S] cluster. A helical membrane pass occupies residues Ile571–Leu591. Over Tyr592–Asn753 the chain is Mitochondrial intermembrane.

It in the N-terminal section; belongs to the methyltransferase superfamily. Rsm22 family. The protein in the C-terminal section; belongs to the COX11/CtaG family. Associates with the mitochondrial ribosome (mitoribosome). Only transiently interacts with the mitoribosome. In terms of processing, specific enzymatic cleavages in vivo by mitochondrial processing peptidase (MPP) yield mature proteins including rsm22-2 and cox11-2.

It localises to the mitochondrion. It is found in the mitochondrion inner membrane. Functionally, mitochondrial ribosome (mitoribosome) assembly factor. Binds at the interface of the head and body domains of the mitochondrial small ribosomal subunit (mt-SSU), occluding the mRNA channel and preventing compaction of the head domain towards the body. Probable inactive methyltransferase: retains the characteristic folding and ability to bind S-adenosyl-L-methionine, but it probably lost its methyltransferase activity. Its function is as follows. Exerts its effect at some terminal stage of cytochrome c oxidase synthesis, probably by being involved in the insertion of the copper B into subunit I. The chain is Rsm22-cox11 tandem protein 2, mitochondrial (cox1102) from Schizosaccharomyces pombe (strain 972 / ATCC 24843) (Fission yeast).